The following is a 64-amino-acid chain: Small, acid-soluble spore protein D (64 aa).

The protein belongs to the alpha/beta-type SASP family.

SASP are bound to spore DNA. They are double-stranded DNA-binding proteins that cause DNA to change to an a-like conformation. They protect the DNA backbone from chemical and enzymatic cleavage and are thus involved in dormant spore's high resistance to UV light. The sequence is that of Small, acid-soluble spore protein D (sspD) from Bacillus subtilis (strain 168).